Consider the following 346-residue polypeptide: 4-amino-5-hydroxymethyl-2-methylpyrimidine phosphate synthase (346 aa).

An N6-(pyridoxal phosphate)lysine modification is found at lysine 62. Residue histidine 66 is part of the active site. 114-117 (GEFG) provides a ligand contact to pyridoxal 5'-phosphate. The CCCFC; essential for catalytic activity, may be the site of iron coordination motif lies at 194-198 (CCCFC).

It belongs to the NMT1/THI5 family. As to quaternary structure, homodimer. The cofactor is Fe cation.

Its subcellular location is the cytoplasm. The protein localises to the nucleus. The enzyme catalyses N(6)-(pyridoxal phosphate)-L-lysyl-[4-amino-5-hydroxymethyl-2-methylpyrimidine phosphate synthase] + L-histidyl-[4-amino-5-hydroxymethyl-2-methylpyrimidine phosphate synthase] + 2 Fe(3+) + 4 H2O = L-lysyl-[4-amino-5-hydroxymethyl-2-methylpyrimidine phosphate synthase] + (2S)-2-amino-5-hydroxy-4-oxopentanoyl-[4-amino-5-hydroxymethyl-2-methylpyrimidine phosphate synthase] + 4-amino-2-methyl-5-(phosphooxymethyl)pyrimidine + 3-oxopropanoate + 2 Fe(2+) + 2 H(+). The protein operates within cofactor biosynthesis; thiamine diphosphate biosynthesis. Functionally, responsible for the formation of the pyrimidine heterocycle in the thiamine biosynthesis pathway. Catalyzes the formation of hydroxymethylpyrimidine phosphate (HMP-P) from histidine and pyridoxal phosphate (PLP). The protein uses PLP and the active site histidine to form HMP-P, generating an inactive enzyme. The enzyme can only undergo a single turnover, which suggests it is a suicide enzyme. The protein is 4-amino-5-hydroxymethyl-2-methylpyrimidine phosphate synthase of Schizosaccharomyces pombe (strain 972 / ATCC 24843) (Fission yeast).